The primary structure comprises 92 residues: MTKRTKKAGIVGKYGTRYGASLRKQIKKMEVSQHSKFFCEFCGKFAVKRKAVGIWGCKDCGKVKAGGAYTLNTPSAVTVRSTIRRLREQTEG.

The C4-type zinc-finger motif lies at 39 to 60 (CEFCGKFAVKRKAVGIWGCKDC).

Belongs to the eukaryotic ribosomal protein eL43 family.

In Pseudotsuga menziesii (Douglas-fir), this protein is Large ribosomal subunit protein eL43 (RPL37A).